The chain runs to 348 residues: Protein-glutamate methylesterase/protein-glutamine glutaminase 2 (348 aa).

The Response regulatory domain occupies 5–122; that stretch reads KVLIIDDSAL…DLGLSQYRDE (118 aa). Residue Asp56 is modified to 4-aspartylphosphate. The CheB-type methylesterase domain maps to 157–348; the sequence is SLKTGFLCAI…AANIIKHALK (192 aa). Catalysis depends on residues Ser169, His195, and Asp291.

The protein belongs to the CheB family. Post-translationally, phosphorylated by CheA. Phosphorylation of the N-terminal regulatory domain activates the methylesterase activity.

It is found in the cytoplasm. The enzyme catalyses [protein]-L-glutamate 5-O-methyl ester + H2O = L-glutamyl-[protein] + methanol + H(+). It catalyses the reaction L-glutaminyl-[protein] + H2O = L-glutamyl-[protein] + NH4(+). In terms of biological role, involved in chemotaxis. Part of a chemotaxis signal transduction system that modulates chemotaxis in response to various stimuli. Catalyzes the demethylation of specific methylglutamate residues introduced into the chemoreceptors (methyl-accepting chemotaxis proteins or MCP) by CheR. Also mediates the irreversible deamidation of specific glutamine residues to glutamic acid. This Saccharophagus degradans (strain 2-40 / ATCC 43961 / DSM 17024) protein is Protein-glutamate methylesterase/protein-glutamine glutaminase 2.